The primary structure comprises 396 residues: 1-deoxy-D-xylulose 5-phosphate reductoisomerase (396 aa).

NADPH is bound by residues Thr-10, Gly-11, Ser-12, Ile-13, and Asn-123. Lys-124 provides a ligand contact to 1-deoxy-D-xylulose 5-phosphate. Glu-125 contacts NADPH. Asp-149 is a binding site for Mn(2+). 1-deoxy-D-xylulose 5-phosphate is bound by residues Ser-150, Glu-151, Ser-185, and His-208. Position 151 (Glu-151) interacts with Mn(2+). Gly-214 contributes to the NADPH binding site. The 1-deoxy-D-xylulose 5-phosphate site is built by Ser-221, Asn-226, Lys-227, and Glu-230. Glu-230 serves as a coordination point for Mn(2+).

The protein belongs to the DXR family. Requires Mg(2+) as cofactor. Mn(2+) is required as a cofactor.

It carries out the reaction 2-C-methyl-D-erythritol 4-phosphate + NADP(+) = 1-deoxy-D-xylulose 5-phosphate + NADPH + H(+). It participates in isoprenoid biosynthesis; isopentenyl diphosphate biosynthesis via DXP pathway; isopentenyl diphosphate from 1-deoxy-D-xylulose 5-phosphate: step 1/6. Catalyzes the NADPH-dependent rearrangement and reduction of 1-deoxy-D-xylulose-5-phosphate (DXP) to 2-C-methyl-D-erythritol 4-phosphate (MEP). The polypeptide is 1-deoxy-D-xylulose 5-phosphate reductoisomerase (Shewanella baltica (strain OS223)).